The primary structure comprises 166 residues: Protein SprT (166 aa).

In terms of domain architecture, SprT-like spans 19–164 (REHLAKANLK…CVHCGDLLVA (146 aa)). A Zn(2+)-binding site is contributed by histidine 78. Glutamate 79 is a catalytic residue. A Zn(2+)-binding site is contributed by histidine 82.

This sequence belongs to the SprT family. Zn(2+) is required as a cofactor.

It is found in the cytoplasm. The polypeptide is Protein SprT (Klebsiella pneumoniae (strain 342)).